The sequence spans 293 residues: Ethanolamine ammonia-lyase small subunit (293 aa).

Adenosylcob(III)alamin-binding residues include Val-207 and Glu-228.

Belongs to the EutC family. The basic unit is a heterodimer which dimerizes to form tetramers. The heterotetramers trimerize; 6 large subunits form a core ring with 6 small subunits projecting outwards. Requires adenosylcob(III)alamin as cofactor.

The protein localises to the bacterial microcompartment. It carries out the reaction ethanolamine = acetaldehyde + NH4(+). It participates in amine and polyamine degradation; ethanolamine degradation. In terms of biological role, catalyzes the deamination of various vicinal amino-alcohols to oxo compounds. Allows this organism to utilize ethanolamine as the sole source of nitrogen and carbon in the presence of external vitamin B12. This is Ethanolamine ammonia-lyase small subunit from Listeria monocytogenes serovar 1/2a (strain ATCC BAA-679 / EGD-e).